The chain runs to 232 residues: Beta-casein (232 aa).

The first 15 residues, 1 to 15 (MKVLILACRVALALA), serve as a signal peptide directing secretion. Phosphoserine occurs at positions 30, 32, 33, and 34.

This sequence belongs to the beta-casein family. As to expression, mammary gland specific. Secreted in milk.

The protein localises to the secreted. Important role in determination of the surface properties of the casein micelles. This Camelus dromedarius (Dromedary) protein is Beta-casein (CSN2).